Consider the following 508-residue polypeptide: Light-independent protochlorophyllide reductase subunit B (508 aa).

Asp36 is a [4Fe-4S] cluster binding site. Residue Asp294 is the Proton donor of the active site. Residue 429-430 participates in substrate binding; the sequence is GM.

Belongs to the ChlB/BchB/BchZ family. In terms of assembly, protochlorophyllide reductase is composed of three subunits; ChlL, ChlN and ChlB. Forms a heterotetramer of two ChlB and two ChlN subunits. [4Fe-4S] cluster serves as cofactor.

It carries out the reaction chlorophyllide a + oxidized 2[4Fe-4S]-[ferredoxin] + 2 ADP + 2 phosphate = protochlorophyllide a + reduced 2[4Fe-4S]-[ferredoxin] + 2 ATP + 2 H2O. The protein operates within porphyrin-containing compound metabolism; chlorophyll biosynthesis (light-independent). In terms of biological role, component of the dark-operative protochlorophyllide reductase (DPOR) that uses Mg-ATP and reduced ferredoxin to reduce ring D of protochlorophyllide (Pchlide) to form chlorophyllide a (Chlide). This reaction is light-independent. The NB-protein (ChlN-ChlB) is the catalytic component of the complex. This Picosynechococcus sp. (strain ATCC 27264 / PCC 7002 / PR-6) (Agmenellum quadruplicatum) protein is Light-independent protochlorophyllide reductase subunit B.